The chain runs to 2332 residues: Genome polyprotein (2332 aa).

The 201-residue stretch at 1–201 (MHTTDCFIAL…WKAMVQRKLK (201 aa)) folds into the Peptidase C28 domain. Topologically, residues 1–1480 (MHTTDCFIAL…SFVKRAFKRL (1480 aa)) are cytoplasmic. Residues Cys-51, His-148, and Asp-163 each act as for leader protease activity in the active site. Disordered stretches follow at residues 199–218 (KLKG…QSGN) and 238–265 (QLGD…NTQN). Gly-202 carries N-myristoyl glycine; by host lipidation. 2 stretches are compositionally biased toward polar residues: residues 204-218 (GQSS…QSGN) and 238-251 (QLGD…SNEG). The span at 252 to 265 (STDTTSTHTTNTQN) shows a compositional bias: low complexity. Positions 789-797 (ALLRAATYY) are antigenic epitope. The short motif at 868 to 870 (RGD) is the Cell attachment site element. Residues 1189 to 1353 (NVHIANLCKV…DGYKINNKLD (165 aa)) enclose the SF3 helicase domain. 1217 to 1224 (GKSGQGKS) provides a ligand contact to ATP. The stretch at 1481–1501 (KENFEIVALCLTLLANIVIMI) is an intramembrane region. Topologically, residues 1502 to 2332 (RETRKRQKMV…RWVNAVCGDA (831 aa)) are cytoplasmic. Composition is skewed to basic and acidic residues over residues 1529–1538 (KTLDEAEKNP) and 1549–1563 (FRER…RDDV). Residues 1529 to 1584 (KTLDEAEKNPLETSGASTVGFRERTLPGQKARDDVNSEPAQPAEEQPQAEGPYAGP) are disordered. The segment covering 1566-1578 (EPAQPAEEQPQAE) has biased composition (low complexity). O-(5'-phospho-RNA)-tyrosine is present on residues Tyr-1581, Tyr-1604, and Tyr-1628. The 197-residue stretch at 1652–1848 (APPTDLQKMV…YCSCVSRSML (197 aa)) folds into the Peptidase C3 domain. His-1695 acts as the For protease 3C activity; Proton donor/acceptor in catalysis. Residues Asp-1733 and Cys-1812 each act as for protease 3C activity in the active site. A Nuclear localization signal motif is present at residues 1878–1886 (MRKTKLAPT). Residues 2096 to 2214 (RNVWDVDYSA…ASDYDLDFEA (119 aa)) form the RdRp catalytic domain. Asp-2200 functions as the For RdRp activity in the catalytic mechanism.

This sequence belongs to the picornaviruses polyprotein family. Interacts with host ISG15. Capsid protein VP1: Interacts (via R-G-D motif) with host ITGAV/ITGB6. As to quaternary structure, interacts (via R-G-D motif) with host ITGAV/ITGB6. Interacts with host MAVS; this interaction inhibits binding of host TRAF3 to MAVS, thereby suppressing interferon-mediated responses. In terms of assembly, forms homooligomers. Homohexamer. Interacts with host VIM. Interacts with host BECN1. As to quaternary structure, interacts with host DCTN3. In terms of assembly, interacts with RNA-dependent RNA polymerase; this interaction allows 3B-1 to binds 2 polymerases and act as a primer. It also allows the recruitment of the RNA-dependent RNA polymerase to host membranes. Interacts with RNA-dependent RNA polymerase; this interaction allows 3B-2 to act as a primer. As to quaternary structure, interacts with RNA-dependent RNA polymerase; this interaction allows 3B-3 to act as a primer. In terms of assembly, interacts with 3B-1; this interaction allows 3B-1 to binds 2 polymerases and act as a primer. It also allows the recruitment of the RNA-dependent RNA polymerase to host membranes. Interacts with 3B-2; this interaction allows 3B-2 to act as a primer. Interacts with 3B-3; this interaction allows 3B-3 to act as a primer. Post-translationally, removes six residues from its own C-terminus, generating sLb(pro). Specific enzymatic cleavages in vivo by the viral proteases yield a variety of precursors and mature proteins. The polyprotein seems to be cotranslationally cleaved at the 2A/2B junction by a ribosomal skip from one codon to the next without formation of a peptide bond. This process would release the L-P1-2A peptide from the translational complex. In terms of processing, during virion maturation, immature virions are rendered infectious following cleavage of VP0 into VP4 and VP2. This maturation seems to be an autocatalytic event triggered by the presence of RNA in the capsid and is followed by a conformational change of the particle. Post-translationally, myristoylation is required during RNA encapsidation and formation of the mature virus particle. Uridylylated by the polymerase and covalently linked to the 5'-end of genomic RNA. These uridylylated forms act as a nucleotide-peptide primer for the polymerase.

The protein localises to the host nucleus. It localises to the host cytoplasm. The protein resides in the virion. Its subcellular location is the host endoplasmic reticulum membrane. It is found in the host cytoplasmic vesicle membrane. The catalysed reaction is Autocatalytically cleaves itself from the polyprotein of the foot-and-mouth disease virus by hydrolysis of a Lys-|-Gly bond, but then cleaves host cell initiation factor eIF-4G at bonds -Gly-|-Arg- and -Lys-|-Arg-.. It carries out the reaction a ribonucleoside 5'-triphosphate + H2O = a ribonucleoside 5'-diphosphate + phosphate + H(+). The enzyme catalyses RNA(n) + a ribonucleoside 5'-triphosphate = RNA(n+1) + diphosphate. It catalyses the reaction Selective cleavage of Gln-|-Gly bond in the poliovirus polyprotein. In other picornavirus reactions Glu may be substituted for Gln, and Ser or Thr for Gly.. Its function is as follows. Autocatalytically cleaves itself from the polyprotein at the L/VP0 junction. Also cleaves the host translation initiation factors EIF4G1 and EIF4G3, in order to shut off the capped cellular mRNA transcription. Plays a role in counteracting host innate antiviral response using diverse mechanisms. Possesses a deubiquitinase activity acting on both 'Lys-48' and 'Lys-63'-linked polyubiquitin chains. In turn, inhibits the ubiquitination and subsequent activation of key signaling molecules of type I IFN response such as host RIGI, TBK1, TRAF3 and TRAF6. Inhibits host NF-kappa-B activity by inducing a decrease in RELA mRNA levels. Cleaves a peptide bond in the C-terminus of host ISG15, resulting in the damaging of this modifier that can no longer be attached to target proteins. Also cleaves host G3BP1 and G3BP2 in order to inhibit cytoplasmic stress granules assembly. In terms of biological role, lies on the inner surface of the capsid shell. After binding to the host receptor, the capsid undergoes conformational changes. Capsid protein VP4 is released, capsid protein VP1 N-terminus is externalized, and together, they shape a pore in the host membrane through which the viral genome is translocated into the host cell cytoplasm. After genome has been released, the channel shrinks. Functionally, forms an icosahedral capsid of pseudo T=3 symmetry with capsid proteins VP1 and VP3. The capsid is composed of 60 copies of each capsid protein organized in the form of twelve pentamers and encloses the viral positive strand RNA genome. Upon acidifcation in the endosome, dissociates into pentamers. Forms an icosahedral capsid of pseudo T=3 symmetry with capsid proteins VP0 and VP3. The capsid is composed of 60 copies of each capsid protein organized in the form of twelve pentamers and encloses the viral positive strand RNA genome. Upon acidifcation in the endosome, dissociates into pentamers. Its function is as follows. Forms an icosahedral capsid of pseudo T=3 symmetry with capsid proteins VP2 and VP3. The capsid is composed of 60 copies of each capsid protein organized in the form of twelve pentamers and encloses the viral positive strand RNA genome. Mediates cell entry by attachment to an integrin receptor, usually host ITGAV/ITGB6. In addition, targets host MAVS to suppress type I IFN pathway. Upon acidifcation in the endosome, dissociates into pentamers. In terms of biological role, mediates self-processing of the polyprotein by a translational effect termed 'ribosome skipping'. Mechanistically, 2A-mediated cleavage occurs between the C-terminal glycine and the proline of the downstream protein 2B. In the case of foot-and-mouth disease virus, the 2A oligopeptide is post-translationally 'trimmed' from the C-terminus of the upstream protein 1D by 3C proteinase. Functionally, plays an essential role in the virus replication cycle by acting as a viroporin. Creates a pore in the host endoplasmic reticulum and as a consequence releases Ca2+ in the cytoplasm of infected cell. In turn, high levels of cytoplasmic calcium may trigger membrane trafficking and transport of viral ER-associated proteins to viroplasms, sites of viral genome replication. Associates with and induces structural rearrangements of intracellular membranes. Triggers host autophagy by interacting with host BECN1 and thereby promotes viral replication. Participates in viral replication and interacts with host DHX9. Displays RNA-binding, nucleotide binding and NTPase activities. May play a role in virion morphogenesis and viral RNA encapsidation by interacting with the capsid protein VP3. Its function is as follows. Plays important roles in virus replication, virulence and host range. Cooperates with host DDX56 to inhibit IRF3 nuclear translocation and subsequent type I interferon production. In terms of biological role, covalently linked to the 5'-end of both the positive-strand and negative-strand genomic RNAs. Acts as a genome-linked replication primer. Functionally, cysteine protease that generates mature viral proteins from the precursor polyprotein. In addition to its proteolytic activity, binds to viral RNA and thus influences viral genome replication. RNA and substrate bind cooperatively to the protease. RNA-directed RNA polymerase 3D-POL replicates genomic and antigenomic RNA by recognizing replications specific signals. Covalently attaches UMP to a tyrosine of VPg, which is used to prime RNA synthesis. The positive stranded RNA genome is first replicated at virus induced membranous vesicles, creating a dsRNA genomic replication form. This dsRNA is then used as template to synthesize positive stranded RNA genomes. ss(+)RNA genomes are either translated, replicated or encapsidated. This is Genome polyprotein from Foot-and-mouth disease virus (isolate -/Germany/A5Westerwald/1951 serotype A) (FMDV).